The sequence spans 186 residues: Peptidyl-tRNA hydrolase (186 aa).

Tyrosine 14 contributes to the tRNA binding site. The Proton acceptor role is filled by histidine 19. Tyrosine 64, asparagine 66, and asparagine 113 together coordinate tRNA.

Belongs to the PTH family. Monomer.

Its subcellular location is the cytoplasm. The catalysed reaction is an N-acyl-L-alpha-aminoacyl-tRNA + H2O = an N-acyl-L-amino acid + a tRNA + H(+). Its function is as follows. Hydrolyzes ribosome-free peptidyl-tRNAs (with 1 or more amino acids incorporated), which drop off the ribosome during protein synthesis, or as a result of ribosome stalling. Functionally, catalyzes the release of premature peptidyl moieties from peptidyl-tRNA molecules trapped in stalled 50S ribosomal subunits, and thus maintains levels of free tRNAs and 50S ribosomes. This chain is Peptidyl-tRNA hydrolase, found in Agathobacter rectalis (strain ATCC 33656 / DSM 3377 / JCM 17463 / KCTC 5835 / VPI 0990) (Eubacterium rectale).